The primary structure comprises 355 residues: Fructose-bisphosphate aldolase, cytoplasmic isozyme (355 aa).

2 residues coordinate substrate: Arg-52 and Lys-142. Glu-183 acts as the Proton acceptor in catalysis. Lys-225 serves as the catalytic Schiff-base intermediate with dihydroxyacetone-P.

This sequence belongs to the class I fructose-bisphosphate aldolase family.

The protein resides in the cytoplasm. It carries out the reaction beta-D-fructose 1,6-bisphosphate = D-glyceraldehyde 3-phosphate + dihydroxyacetone phosphate. It participates in carbohydrate degradation; glycolysis; D-glyceraldehyde 3-phosphate and glycerone phosphate from D-glucose: step 4/4. The sequence is that of Fructose-bisphosphate aldolase, cytoplasmic isozyme from Zea mays (Maize).